Here is a 963-residue protein sequence, read N- to C-terminus: Copalyl diphosphate synthase (963 aa).

The interval 1 to 539 is type II terpene cyclase (TC); it reads MSPMDLQESA…EAYILAALKR (539 aa). The substrate binding stretch occupies residues 227–292; the sequence is ATQWDDECED…FIEKIRSYLH (66 aa). Positions 311 and 314 each coordinate Mg(2+). The short motif at 311–314 is the DXDD element; it reads DADD. An NSE/DTE motif is present at residues 333 to 341; that stretch reads AMLKEFEEE. Residues 337–341 and 521–522 each bind substrate; these read EFEEE and VT. Residues 540–659 are linker; the sequence is AADLPDENAE…SVSVHTDHSD (120 aa). Residues 627–648 are compositionally biased toward polar residues; that stretch reads TNGHYVNGTNHETPLTNGISNG. The segment at 627 to 657 is disordered; it reads TNGHYVNGTNHETPLTNGISNGDSVSVHTDH. The segment at 660-963 is geranylfarnesyl diphosphate synthase (PT); the sequence is SYYQRSDWTA…KILARMSLEL (304 aa). The isopentenyl diphosphate site is built by Lys-688, Arg-691, and His-720. 2 residues coordinate Mg(2+): Asp-727 and Asp-731. The short motif at 727–731 is the DDXXD 1 element; it reads DDIQD. Dimethylallyl diphosphate is bound at residue Arg-736. Isopentenyl diphosphate is bound at residue Arg-737. Residues Lys-814, Thr-815, Gln-848, Asn-855, Lys-865, and Lys-875 each contribute to the dimethylallyl diphosphate site. A DDXXD 2 motif is present at residues 851 to 855; it reads DDYLN.

It in the N-terminal section; belongs to the terpene synthase family. The protein in the C-terminal section; belongs to the FPP/GGPP synthase family. As to quaternary structure, homohexamer. The cofactor is Mg(2+).

The catalysed reaction is isopentenyl diphosphate + (2E,6E)-farnesyl diphosphate = (2E,6E,10E)-geranylgeranyl diphosphate + diphosphate. It carries out the reaction (2E,6E,10E)-geranylgeranyl diphosphate = (+)-copalyl diphosphate. In terms of biological role, bifunctional terpene synthase that possesses both prenyltransferase and type II terpene cyclase activity, converting isopentenyl diphosphate (IPP) and dimethylallyl diphosphate (DMAPP) into geranylgeranyl diphosphate (GGPP) and further converting GGPP into copalyl diphosphate, respectively. The chain is Copalyl diphosphate synthase from Talaromyces verruculosus (Penicillium verruculosum).